Reading from the N-terminus, the 485-residue chain is Glutamyl-tRNA(Gln) amidotransferase subunit A (485 aa).

Catalysis depends on charge relay system residues Lys-79 and Ser-154. Residue Ser-178 is the Acyl-ester intermediate of the active site.

Belongs to the amidase family. GatA subfamily. Heterotrimer of A, B and C subunits.

The enzyme catalyses L-glutamyl-tRNA(Gln) + L-glutamine + ATP + H2O = L-glutaminyl-tRNA(Gln) + L-glutamate + ADP + phosphate + H(+). Functionally, allows the formation of correctly charged Gln-tRNA(Gln) through the transamidation of misacylated Glu-tRNA(Gln) in organisms which lack glutaminyl-tRNA synthetase. The reaction takes place in the presence of glutamine and ATP through an activated gamma-phospho-Glu-tRNA(Gln). This Clostridium botulinum (strain Okra / Type B1) protein is Glutamyl-tRNA(Gln) amidotransferase subunit A.